We begin with the raw amino-acid sequence, 217 residues long: tRNA (guanine-N(7)-)-methyltransferase (217 aa).

4 residues coordinate S-adenosyl-L-methionine: E46, E71, D98, and D120. Residue D120 is part of the active site. K124 provides a ligand contact to substrate. Residues 126–131 form an interaction with RNA region; sequence RHEKRR. Substrate contacts are provided by residues D156 and 196–199; that span reads TEYE.

This sequence belongs to the class I-like SAM-binding methyltransferase superfamily. TrmB family.

The enzyme catalyses guanosine(46) in tRNA + S-adenosyl-L-methionine = N(7)-methylguanosine(46) in tRNA + S-adenosyl-L-homocysteine. Its pathway is tRNA modification; N(7)-methylguanine-tRNA biosynthesis. Its function is as follows. Catalyzes the formation of N(7)-methylguanine at position 46 (m7G46) in tRNA. The polypeptide is tRNA (guanine-N(7)-)-methyltransferase (Lactobacillus gasseri (strain ATCC 33323 / DSM 20243 / BCRC 14619 / CIP 102991 / JCM 1131 / KCTC 3163 / NCIMB 11718 / NCTC 13722 / AM63)).